The chain runs to 557 residues: Formate--tetrahydrofolate ligase (557 aa).

An ATP-binding site is contributed by 65-72 (SPAGEGKT).

Belongs to the formate--tetrahydrofolate ligase family.

The catalysed reaction is (6S)-5,6,7,8-tetrahydrofolate + formate + ATP = (6R)-10-formyltetrahydrofolate + ADP + phosphate. Its pathway is one-carbon metabolism; tetrahydrofolate interconversion. This is Formate--tetrahydrofolate ligase from Methylobacillus flagellatus (strain ATCC 51484 / DSM 6875 / VKM B-1610 / KT).